Reading from the N-terminus, the 312-residue chain is HPr kinase/phosphorylase (312 aa).

Residues H141 and K162 contribute to the active site. 156-163 (GDSGIGKS) contacts ATP. Residue S163 participates in Mg(2+) binding. The active-site Proton acceptor; for phosphorylation activity. Proton donor; for dephosphorylation activity is D180. Residues 204-213 (LEIRGVGIID) form an important for the catalytic mechanism of both phosphorylation and dephosphorylation region. E205 contacts Mg(2+). The active site involves R246. An important for the catalytic mechanism of dephosphorylation region spans residues 267 to 272 (PVRVGR).

This sequence belongs to the HPrK/P family. Homohexamer. It depends on Mg(2+) as a cofactor.

It catalyses the reaction [HPr protein]-L-serine + ATP = [HPr protein]-O-phospho-L-serine + ADP + H(+). It carries out the reaction [HPr protein]-O-phospho-L-serine + phosphate + H(+) = [HPr protein]-L-serine + diphosphate. Functionally, catalyzes the ATP- as well as the pyrophosphate-dependent phosphorylation of a specific serine residue in HPr, a phosphocarrier protein of the phosphoenolpyruvate-dependent sugar phosphotransferase system (PTS). HprK/P also catalyzes the pyrophosphate-producing, inorganic phosphate-dependent dephosphorylation (phosphorolysis) of seryl-phosphorylated HPr (P-Ser-HPr). The two antagonistic activities of HprK/P are regulated by several intracellular metabolites, which change their concentration in response to the absence or presence of rapidly metabolisable carbon sources (glucose, fructose, etc.) in the growth medium. Therefore, by controlling the phosphorylation state of HPr, HPrK/P is a sensor enzyme that plays a major role in the regulation of carbon metabolism and sugar transport: it mediates carbon catabolite repression (CCR), and regulates PTS-catalyzed carbohydrate uptake and inducer exclusion. The polypeptide is HPr kinase/phosphorylase (Pediococcus pentosaceus (strain ATCC 25745 / CCUG 21536 / LMG 10740 / 183-1w)).